The primary structure comprises 189 residues: GTPase HRas (189 aa).

10–17 (GAKGVGKS) is a GTP binding site. Positions 32–40 (YDPTIEDSY) match the Effector region motif. GTP is bound by residues 57-61 (DTAGQ) and 116-119 (NKCD). S-palmitoyl cysteine; by host attachment occurs at residues C181 and C184. C186 carries the post-translational modification Cysteine methyl ester; by host. Residue C186 is the site of S-farnesyl cysteine; by host attachment. Residues 187 to 189 (VLS) constitute a propeptide, removed in mature form.

It belongs to the small GTPase superfamily. Ras family.

It localises to the host cell membrane. The catalysed reaction is GTP + H2O = GDP + phosphate + H(+). Alternates between an inactive form bound to GDP and an active form bound to GTP. Activated by a guanine nucleotide-exchange factor (GEF) and inactivated by a GTPase-activating protein (GAP). The chain is GTPase HRas (H-RAS) from Moloney murine sarcoma virus (MoMSV).